The primary structure comprises 141 residues: Protein X (141 aa).

The tract at residues 24-52 is disordered; sequence QSSGPPFPRPAAGSAASSTSSPSPSDESD. Over residues 33–48 the composition is skewed to low complexity; the sequence is PAAGSAASSTSSPSPS. Residues 68 to 113 are mitochondrial targeting sequence; sequence PCCLVFTCADLRTMDSTVNFVSWHAKRQLGMPSKDLWTPYIKDQLL.

This sequence belongs to the orthohepadnavirus protein X family. May form homodimer. May interact with host CEBPA, CFLAR, CREB1, DDB1, E4F1, HBXIP, HSPD1/HSP60, NFKBIA, POLR2E and SMAD4. Interacts with host SMC5-SMC6 complex and induces its degradation. Interacts with host TRPC4AP; leading to prevent ubiquitination of TRPC4AP. Interacts with host PLSCR1; this interaction promotes ubiquitination and degradation of HBx and impairs HBx-mediated cell proliferation. In terms of processing, a fraction may be phosphorylated in insect cells and HepG2 cells, a human hepatoblastoma cell line. Phosphorylated in vitro by host protein kinase C or mitogen-activated protein kinase. N-acetylated in insect cells.

The protein localises to the host cytoplasm. It is found in the host nucleus. The protein resides in the host mitochondrion. Multifunctional protein that plays a role in silencing host antiviral defenses and promoting viral transcription. Does not seem to be essential for HBV infection. May be directly involved in development of cirrhosis and liver cancer (hepatocellular carcinoma). Most of cytosolic activities involve modulation of cytosolic calcium. The effect on apoptosis is controversial depending on the cell types in which the studies have been conducted. May induce apoptosis by localizing in mitochondria and causing loss of mitochondrial membrane potential. May also modulate apoptosis by binding host CFLAR, a key regulator of the death-inducing signaling complex (DISC). Promotes viral transcription by using the host E3 ubiquitin ligase DDB1 to target the SMC5-SMC6 complex to proteasomal degradation. This host complex would otherwise bind to viral episomal DNA, and prevents its transcription. Moderately stimulates transcription of many different viral and cellular transcription elements. Promoters and enhancers stimulated by HBx contain DNA binding sites for NF-kappa-B, AP-1, AP-2, c-EBP, ATF/CREB, or the calcium-activated factor NF-AT. The chain is Protein X from Marmota monax (Woodchuck).